A 120-amino-acid chain; its full sequence is NAD(P)H-quinone oxidoreductase subunit 3, chloroplastic (120 aa).

The next 3 helical transmembrane spans lie at 10-30, 64-84, and 89-109; these read FWAF…TSSL, MFAL…PWAM, and LGVL…IGLV.

Belongs to the complex I subunit 3 family. As to quaternary structure, NDH is composed of at least 16 different subunits, 5 of which are encoded in the nucleus.

The protein localises to the plastid. The protein resides in the chloroplast thylakoid membrane. The enzyme catalyses a plastoquinone + NADH + (n+1) H(+)(in) = a plastoquinol + NAD(+) + n H(+)(out). It carries out the reaction a plastoquinone + NADPH + (n+1) H(+)(in) = a plastoquinol + NADP(+) + n H(+)(out). In terms of biological role, NDH shuttles electrons from NAD(P)H:plastoquinone, via FMN and iron-sulfur (Fe-S) centers, to quinones in the photosynthetic chain and possibly in a chloroplast respiratory chain. The immediate electron acceptor for the enzyme in this species is believed to be plastoquinone. Couples the redox reaction to proton translocation, and thus conserves the redox energy in a proton gradient. This Zygnema circumcarinatum (Green alga) protein is NAD(P)H-quinone oxidoreductase subunit 3, chloroplastic.